A 137-amino-acid polypeptide reads, in one-letter code: Large ribosomal subunit protein bL21 (137 aa).

A disordered region spans residues 1 to 26 (MADTKTATPATDAEEATATPPAAAPS).

Belongs to the bacterial ribosomal protein bL21 family. As to quaternary structure, part of the 50S ribosomal subunit. Contacts protein L20.

In terms of biological role, this protein binds to 23S rRNA in the presence of protein L20. This chain is Large ribosomal subunit protein bL21, found in Parasynechococcus marenigrum (strain WH8102).